The primary structure comprises 479 residues: Adenosylhomocysteinase (479 aa).

Substrate is bound by residues T66, D142, and E203. 204–206 (TTT) provides a ligand contact to NAD(+). Substrate-binding residues include K233 and D237. Residues N238, 267–272 (GYGDVG), E290, N325, 346–348 (IGH), and N394 contribute to the NAD(+) site.

Belongs to the adenosylhomocysteinase family. The cofactor is NAD(+).

It is found in the cytoplasm. It catalyses the reaction S-adenosyl-L-homocysteine + H2O = L-homocysteine + adenosine. Its pathway is amino-acid biosynthesis; L-homocysteine biosynthesis; L-homocysteine from S-adenosyl-L-homocysteine: step 1/1. Its function is as follows. May play a key role in the regulation of the intracellular concentration of adenosylhomocysteine. In Nitratidesulfovibrio vulgaris (strain DSM 19637 / Miyazaki F) (Desulfovibrio vulgaris), this protein is Adenosylhomocysteinase.